A 64-amino-acid chain; its full sequence is UPF0434 protein MADE_1009415 (64 aa).

It belongs to the UPF0434 family.

The polypeptide is UPF0434 protein MADE_1009415 (Alteromonas mediterranea (strain DSM 17117 / CIP 110805 / LMG 28347 / Deep ecotype)).